We begin with the raw amino-acid sequence, 239 residues long: Protein-S-isoprenylcysteine O-methyltransferase (239 aa).

Topologically, residues 1–23 are cytoplasmic; it reads MHQDFQEDEHEYPDIRRNPLHEV. Residues 24–44 traverse the membrane as a helical segment; the sequence is TMTSYILGILLGIFVGLFPQI. The Lumenal segment spans residues 45–47; it reads RFK. A helical transmembrane segment spans residues 48-68; it reads NFNLFIIALSLFHFLEYYITA. At 69–88 the chain is on the cytoplasmic side; that stretch reads KYNPLKVHSESFLLNNGKSY. Residues 89–109 form a helical membrane-spanning segment; sequence MAAHSFAILECLVESFLFPDL. Position 110 (Lys110) is a topological domain, lumenal. Residues 111-131 form a helical membrane-spanning segment; it reads IFSYSLATKLCTVLGCLLVIL. Residues 132 to 175 are Cytoplasmic-facing; sequence GQYTRTIAMHTAGHSFSHIVKTKKESDHVLVKTGVYSWSRHPSY. S-adenosyl-L-methionine contacts are provided by residues 159–162, Tyr167, and 172–175; these read HVLV and HPSY. The helical intramembrane region spans 176 to 206; sequence LGFFWWAIGTQLLLLNPLSLVIFIFVLWKFF. At 207-239 the chain is on the cytoplasmic side; the sequence is SDRIRVEEKYLIEFFSAEYIEYKNKVGVGIPFI. A substrate-binding site is contributed by Arg209. Glu213 serves as a coordination point for S-adenosyl-L-methionine.

The protein belongs to the class VI-like SAM-binding methyltransferase superfamily. Isoprenylcysteine carboxyl methyltransferase family.

It localises to the endoplasmic reticulum membrane. It carries out the reaction [protein]-C-terminal S-[(2E,6E)-farnesyl]-L-cysteine + S-adenosyl-L-methionine = [protein]-C-terminal S-[(2E,6E)-farnesyl]-L-cysteine methyl ester + S-adenosyl-L-homocysteine. Functionally, mediates C-terminal methylation of the isoprenylated C-terminal cysteine in A-factor mating pheromone and Ras proteins. Does not have a preference for the farnesyl or geranylgeranyl moieties in the model substrates N-acetyl-S-farnesyl-L-cysteine (AFC) and N-acetyl-S-geranylgeranyl-L-cysteine (AGGC) in vitro. The polypeptide is Protein-S-isoprenylcysteine O-methyltransferase (STE14) (Saccharomyces cerevisiae (strain ATCC 204508 / S288c) (Baker's yeast)).